Here is a 582-residue protein sequence, read N- to C-terminus: 5-aminolevulinate synthase, erythroid-specific, mitochondrial (582 aa).

Residue arginine 158 participates in succinyl-CoA binding. Residues cysteine 253 and phenylalanine 254 each coordinate pyridoxal 5'-phosphate. The succinyl-CoA site is built by serine 275 and arginine 294. Positions 327, 355, and 383 each coordinate pyridoxal 5'-phosphate. Lysine 386 is a catalytic residue. Lysine 386 carries the post-translational modification N6-(pyridoxal phosphate)lysine. Pyridoxal 5'-phosphate-binding residues include threonine 415 and threonine 416. A succinyl-CoA-binding site is contributed by threonine 503.

The protein belongs to the class-II pyridoxal-phosphate-dependent aminotransferase family. Homodimer. It depends on pyridoxal 5'-phosphate as a cofactor.

It localises to the mitochondrion inner membrane. It catalyses the reaction succinyl-CoA + glycine + H(+) = 5-aminolevulinate + CO2 + CoA. The protein operates within porphyrin-containing compound metabolism; protoporphyrin-IX biosynthesis; 5-aminolevulinate from glycine: step 1/1. In terms of biological role, catalyzes the pyridoxal 5'-phosphate (PLP)-dependent condensation of succinyl-CoA and glycine to form aminolevulinic acid (ALA), with CoA and CO2 as by-products. Contributes significantly to heme formation during erythropoiesis. The chain is 5-aminolevulinate synthase, erythroid-specific, mitochondrial (alas2) from Opsanus tau (Oyster toadfish).